The primary structure comprises 135 residues: Ribosome-binding factor A (135 aa).

The protein belongs to the RbfA family. Monomer. Binds 30S ribosomal subunits, but not 50S ribosomal subunits or 70S ribosomes.

The protein localises to the cytoplasm. Its function is as follows. One of several proteins that assist in the late maturation steps of the functional core of the 30S ribosomal subunit. Associates with free 30S ribosomal subunits (but not with 30S subunits that are part of 70S ribosomes or polysomes). Required for efficient processing of 16S rRNA. May interact with the 5'-terminal helix region of 16S rRNA. This Aliivibrio fischeri (strain MJ11) (Vibrio fischeri) protein is Ribosome-binding factor A.